Consider the following 214-residue polypeptide: MDSQEYIPQYKLILVGDGGVGKTTFVKRHLTGEFEKKYIPTLGVEVHPLKFQTNFGKTQFNVWDTAGQEKFGGLRDGYYIKSDCAIIMFDVSSRITYKNVPNWYRDITRVCETIPMVLVGNKVDVKDRQVKSRQIQFHRKRNLQYYDLSARSNYNFEKPFLWLARRLSNQPNLVFVGEHAKAPEFQIDLNIVREAEKELEQAAAVAIDEEDIEN.

One can recognise a Small GTPase Ran-type domain in the interval 6-170; the sequence is YIPQYKLILV…LWLARRLSNQ (165 aa). 17–24 serves as a coordination point for GTP; that stretch reads DGGVGKTT. The segment at 36-44 is switch-I; sequence KKYIPTLGV. Residues Gly-67, 121–124, and 149–151 each bind GTP; these read NKVD and SAR. The segment at 67–83 is switch-II; that stretch reads GQEKFGGLRDGYYIKSD.

It belongs to the small GTPase superfamily. Ran family. Found in a nuclear export complex with RanGTP, exportin and pre-miRNA.

It is found in the nucleus. Functionally, GTP-binding protein involved in nucleocytoplasmic transport. Required for the import of protein into the nucleus and also for RNA export. Involved in chromatin condensation and control of cell cycle. The chain is GTP-binding nuclear protein Ran from Plasmodium falciparum.